Consider the following 290-residue polypeptide: L-cysteine S-thiosulfotransferase subunit SoxA (290 aa).

The N-terminal stretch at 1 to 26 (MPRFTKTKGTLAATALGLALAGAAFA) is a signal peptide. Zn(2+) contacts are provided by aspartate 78 and aspartate 81. Positions 78–171 (DDFDNPAMVF…DMLSLISLQS (94 aa)) constitute a Cytochrome c domain. The heme c site is built by cysteine 106, cysteine 109, histidine 110, and cysteine 143. Histidine 190 contacts Zn(2+). Heme c is bound by residues cysteine 206, cysteine 209, and histidine 210. Arginine 247 is a substrate binding site. Cysteine 251 is a heme c binding site. The Cysteine persulfide intermediate role is filled by cysteine 251. Residue aspartate 266 participates in Zn(2+) binding.

Belongs to the SoxA family. In terms of assembly, heterodimer of SoxA and SoxX. It depends on heme c as a cofactor. The cofactor is Zn(2+). In terms of processing, cysteine persulfide at Cys-251.

The protein localises to the periplasm. The enzyme catalyses L-cysteinyl-[SoxY protein] + thiosulfate + 2 Fe(III)-[cytochrome c] = S-sulfosulfanyl-L-cysteinyl-[SoxY protein] + 2 Fe(II)-[cytochrome c] + 2 H(+). It catalyses the reaction S-sulfanyl-L-cysteinyl-[SoxY protein] + thiosulfate + 2 Fe(III)-[cytochrome c] = S-(2-sulfodisulfanyl)-L-cysteinyl-[SoxY protein] + 2 Fe(II)-[cytochrome c] + 2 H(+). In terms of biological role, C-type diheme cytochrome, which is part of the SoxAX cytochrome complex involved in sulfur oxidation. The SoxAX complex catalyzes the formation of a heterodisulfide bond between the conserved cysteine residue on a sulfur carrier SoxYZ complex subunit SoxY and thiosulfate or other inorganic sulfur substrates. This leads to the liberation of two electrons, which may be transferred from the SoxAX complex to another cytochrome c that then channels them into the respiratory electron transport chain. Some electrons may be used for reductive CO(2) fixation. The sequence is that of L-cysteine S-thiosulfotransferase subunit SoxA from Paracoccus pantotrophus (Thiosphaera pantotropha).